Consider the following 142-residue polypeptide: ATP synthase epsilon chain (142 aa).

This sequence belongs to the ATPase epsilon chain family. As to quaternary structure, F-type ATPases have 2 components, CF(1) - the catalytic core - and CF(0) - the membrane proton channel. CF(1) has five subunits: alpha(3), beta(3), gamma(1), delta(1), epsilon(1). CF(0) has three main subunits: a, b and c.

Its subcellular location is the cell inner membrane. Produces ATP from ADP in the presence of a proton gradient across the membrane. The polypeptide is ATP synthase epsilon chain (Shewanella baltica (strain OS155 / ATCC BAA-1091)).